The sequence spans 572 residues: Formate--tetrahydrofolate ligase (572 aa).

Threonine 65–threonine 72 provides a ligand contact to ATP.

The protein belongs to the formate--tetrahydrofolate ligase family.

It carries out the reaction (6S)-5,6,7,8-tetrahydrofolate + formate + ATP = (6R)-10-formyltetrahydrofolate + ADP + phosphate. The protein operates within one-carbon metabolism; tetrahydrofolate interconversion. In Chloroflexus aggregans (strain MD-66 / DSM 9485), this protein is Formate--tetrahydrofolate ligase.